A 161-amino-acid chain; its full sequence is Succinate dehydrogenase assembly factor 2, mitochondrial (161 aa).

Residues 1–31 (MSLLRVTRSSGHLSAVCRLPARSISTTSILL) constitute a mitochondrion transit peptide.

This sequence belongs to the SDHAF2 family. Interacts with the flavoprotein subunit within the SDH catalytic dimer.

The protein localises to the mitochondrion matrix. Its function is as follows. Plays an essential role in the assembly of succinate dehydrogenase (SDH), an enzyme complex (also referred to as respiratory complex II) that is a component of both the tricarboxylic acid (TCA) cycle and the mitochondrial electron transport chain, and which couples the oxidation of succinate to fumarate with the reduction of ubiquinone (coenzyme Q) to ubiquinol. Required for flavinylation (covalent attachment of FAD) of the flavoprotein subunit of the SDH catalytic dimer. The sequence is that of Succinate dehydrogenase assembly factor 2, mitochondrial from Aedes aegypti (Yellowfever mosquito).